The following is a 286-amino-acid chain: 2-oxoglutarate synthase subunit KorB (286 aa).

As to quaternary structure, heterotetramer of the KorA, KorB, KorC and KorD subunits.

It catalyses the reaction 2 oxidized [2Fe-2S]-[ferredoxin] + 2-oxoglutarate + CoA = succinyl-CoA + 2 reduced [2Fe-2S]-[ferredoxin] + CO2 + H(+). The polypeptide is 2-oxoglutarate synthase subunit KorB (korB) (Methanothermobacter thermautotrophicus (strain ATCC 29096 / DSM 1053 / JCM 10044 / NBRC 100330 / Delta H) (Methanobacterium thermoautotrophicum)).